A 410-amino-acid chain; its full sequence is Transcription factor Dp-1 (410 aa).

At Lys3 the chain carries N6-acetyllysine. Position 23 is a phosphoserine; by CDK2 (Ser23). The interval 77–114 (VVGSPHTPNTHFVSQNQPSDPSPWSAGKRNRKGEKNGK) is disordered. Residues 82-95 (HTPNTHFVSQNQPS) show a composition bias toward polar residues. The span at 104-114 (KRNRKGEKNGK) shows a compositional bias: basic residues. Residues 105–127 (RNRKGEKNGKGLRHFSMKVCEKV) form an interaction with CEBPA region. A DNA-binding region spans residues 113–195 (GKGLRHFSMK…KKEIKWIGLP (83 aa)). The DEF box signature appears at 161–195 (DQKNIRRRVYDALNVLMAMNIISKEKKEIKWIGLP). Residues 204-277 (SLEVERQRRL…KKTVIDCSIS (74 aa)) form a dimerization region. Positions 211–327 (RRLERIKQKQ…DLRVARSLVP (117 aa)) are enhances binding of RB protein to E2F. The segment at 214–246 (ERIKQKQSQLQELILQQIAFKNLVQRNRQVEQQ) is DCB1. The tract at residues 259-315 (LPFIIVNTSKKTVIDCSISNDKFEYLFNFDNTFEIHDDIEVLKRMGMACGLESGSCS) is DCB2. The disordered stretch occupies residues 370-410 (GALATSSSGSQYSGSRVETPVSCVGEDDEDDEDFNENEEED). A compositionally biased stretch (low complexity) spans 375–384 (SSSGSQYSGS). Acidic residues predominate over residues 394-410 (GEDDEDDEDFNENEEED).

It belongs to the E2F/DP family. As to quaternary structure, component of the E2F:DP transcription factor complex. Forms heterodimers with E2F family members. The complex can interact with hypophosphorylated retinoblastoma protein RB1 and related proteins (RBL1 and RBL2) that inhibit the E2F transactivation domain. This repression involves recruitment of histone deacetylase (HDAC). During the cell cycle, from mid-to-late G1 phase, RB family members become phosphorylated, detach from the DRTF1/E2F complex to render E2F transcriptionally active. Part of the E2F6.com-1 complex in G0 phase is composed of E2F6, MGA, MAX, TFDP1, CBX3, BAT8, EUHMTASE1, RING1, RNF2, MBLR, L3MBTL2 YAF2. Component of the DREAM complex (also named LINC complex) at least composed of E2F4, E2F5, LIN9, LIN37, LIN52, LIN54, MYBL1, MYBL2, RBL1, RBL2, RBBP4, TFDP1 and TFDP2. The complex exists in quiescent cells where it represses cell cycle-dependent genes. It dissociates in S phase when LIN9, LIN37, LIN52 and LIN54 form a subcomplex that binds to MYBL2. The complex TFDP1:E2F1 interacts with CEBPA; the interaction prevents CEBPA binding to target gene promoters and represses its transcriptional activity. Ubiquitinated by the BCR(KBTBD5) complex, leading to its subsequent degradation. Post-translationally, phosphorylation by E2F1-bound cyclin A-CDK2, in the S phase, inhibits E2F-mediated DNA binding and transactivation.

The protein localises to the nucleus. It localises to the cytoplasm. Functionally, can stimulate E2F-dependent transcription. Binds DNA cooperatively with E2F family members through the E2 recognition site, 5'-TTTC[CG]CGC-3', found in the promoter region of a number of genes whose products are involved in cell cycle regulation or in DNA replication. The E2F1:DP complex appears to mediate both cell proliferation and apoptosis. Blocks adipocyte differentiation by repressing CEBPA binding to its target gene promoters. The protein is Transcription factor Dp-1 (TFDP1) of Bos taurus (Bovine).